The chain runs to 517 residues: Ribose import ATP-binding protein RbsA 1 (517 aa).

ABC transporter domains lie at 11–251 (LEMR…VGRD) and 263–507 (YDPG…ALAT). An ATP-binding site is contributed by 43–50 (GENGAGKS).

Belongs to the ABC transporter superfamily. Ribose importer (TC 3.A.1.2.1) family. In terms of assembly, the complex is composed of an ATP-binding protein (RbsA), two transmembrane proteins (RbsC) and a solute-binding protein (RbsB).

Its subcellular location is the cell inner membrane. It catalyses the reaction D-ribose(out) + ATP + H2O = D-ribose(in) + ADP + phosphate + H(+). Part of the ABC transporter complex RbsABC involved in ribose import. Responsible for energy coupling to the transport system. The protein is Ribose import ATP-binding protein RbsA 1 of Burkholderia cenocepacia (strain HI2424).